Here is a 369-residue protein sequence, read N- to C-terminus: Glutamate 5-kinase (369 aa).

Lysine 9 serves as a coordination point for ATP. Serine 49, aspartate 136, and asparagine 148 together coordinate substrate. Residues 168-169 (TD) and 210-216 (TGGMLTK) each bind ATP. The 81-residue stretch at 275–355 (QGSIWVDKGA…KGVLIYRDDW (81 aa)) folds into the PUA domain.

It belongs to the glutamate 5-kinase family.

The protein resides in the cytoplasm. It carries out the reaction L-glutamate + ATP = L-glutamyl 5-phosphate + ADP. The protein operates within amino-acid biosynthesis; L-proline biosynthesis; L-glutamate 5-semialdehyde from L-glutamate: step 1/2. Catalyzes the transfer of a phosphate group to glutamate to form L-glutamate 5-phosphate. In Streptococcus pneumoniae (strain Hungary19A-6), this protein is Glutamate 5-kinase.